Consider the following 545-residue polypeptide: Membrane protein insertase YidC (545 aa).

4 helical membrane passes run 350–370, 424–444, 461–481, and 498–518; these read IIGNWGWAIVVLTIIVKAVLY, LPMLLQIPVFIGLYWALFASV, ADPYYILPIIMAATMFAQTYL, and PLVFSVMFFFFPAGLVLYWVV.

It belongs to the OXA1/ALB3/YidC family. Type 1 subfamily. In terms of assembly, interacts with the Sec translocase complex via SecD. Specifically interacts with transmembrane segments of nascent integral membrane proteins during membrane integration.

The protein resides in the cell inner membrane. Functionally, required for the insertion and/or proper folding and/or complex formation of integral membrane proteins into the membrane. Involved in integration of membrane proteins that insert both dependently and independently of the Sec translocase complex, as well as at least some lipoproteins. Aids folding of multispanning membrane proteins. This chain is Membrane protein insertase YidC, found in Neisseria gonorrhoeae (strain NCCP11945).